Here is a 502-residue protein sequence, read N- to C-terminus: Keratin, type II cytoskeletal 8 (502 aa).

A head region spans residues 1–98 (MSVRSTKVTY…DPSIQQVRTE (98 aa)). Phosphoserine occurs at positions 13, 26, 37, and 40. Residues 99–134 (EKEQIKTLNNKFASFIDKVRFLEQQNKMLETKWNLL) are coil 1A. Residues 99-410 (EKEQIKTLNN…KLLEGEESRL (312 aa)) enclose the IF rod domain. Positions 135–151 (QNQKTTRSNMDGMFEAY) are linker 1. The coil 1B stretch occupies residues 152-243 (ISNLRRQLDG…QLYEEELREM (92 aa)). The tract at residues 244 to 267 (QSQISDTSVVLSMDNNRSLDLDGI) is linker 12. Residues 268–406 (IAEVRAQYED…ATYRKLLEGE (139 aa)) are coil 2. The tract at residues 269–390 (AEVRAQYEDV…DYQELMNVKL (122 aa)) is necessary for interaction with PNN. Positions 407–502 (ESRLESGFQN…SESSDVFSKP (96 aa)) are tail. A phosphoserine mark is found at S425, S428, S436, and S444.

Belongs to the intermediate filament family. As to quaternary structure, heterotetramer of two type I and two type II keratins. Keratin-8 associates with keratin-18. As to expression, expressed in oocytes, eggs, embryos, liver and intestinal mucosa.

The protein resides in the cytoplasm. Its subcellular location is the nucleus. It is found in the nucleoplasm. The protein localises to the nucleus matrix. Together with KRT19, helps to link the contractile apparatus to dystrophin at the costameres of striated muscle. The sequence is that of Keratin, type II cytoskeletal 8 from Xenopus laevis (African clawed frog).